Consider the following 200-residue polypeptide: 3-isopropylmalate dehydratase small subunit (200 aa).

The protein belongs to the LeuD family. LeuD type 1 subfamily. As to quaternary structure, heterodimer of LeuC and LeuD.

The enzyme catalyses (2R,3S)-3-isopropylmalate = (2S)-2-isopropylmalate. The protein operates within amino-acid biosynthesis; L-leucine biosynthesis; L-leucine from 3-methyl-2-oxobutanoate: step 2/4. Its function is as follows. Catalyzes the isomerization between 2-isopropylmalate and 3-isopropylmalate, via the formation of 2-isopropylmaleate. This chain is 3-isopropylmalate dehydratase small subunit, found in Actinobacillus pleuropneumoniae serotype 5b (strain L20).